The chain runs to 153 residues: Proline-rich membrane anchor 1 (153 aa).

Positions 1–35 (MLLRDLVLRHGCCWPSLLLHCALHPLWGLVQVTHA) are cleaved as a signal peptide. Over 36-92 (EPQKSCSKVTDSCQHICQCRPPPPLPPPPPPPPPPRLLSAPAPNSTSCPAEDSWWSG) the chain is Extracellular. The PRAD domain maps to 56-70 (PPPPLPPPPPPPPPP). Over residues 59–71 (PLPPPPPPPPPPR) the composition is skewed to pro residues. A disordered region spans residues 59-79 (PLPPPPPPPPPPRLLSAPAPN). Asn79 carries N-linked (GlcNAc...) asparagine glycosylation. The helical transmembrane segment at 93-113 (LVIIVAVVCASLVFLTVLVII) threads the bilayer. Residues 114–153 (CYKAIKRKPLRKDENGASVAEYPMSSSPSNKGVDVNAAVV) are Cytoplasmic-facing. The disordered stretch occupies residues 133–153 (AEYPMSSSPSNKGVDVNAAVV).

Interacts with ACHE, probably through disulfide bonds. As to expression, isoforms 1 and 2 are expressed in the adult brain. In matured cortical neurons, only isoform 1 is detectable.

Its subcellular location is the cell membrane. It is found in the cell junction. The protein localises to the synapse. Functionally, required to anchor acetylcholinesterase (ACHE) to the basal lamina of the neuromuscular junction and to the membrane of neuronal synapses in brain. Organizes ACHE into tetramers. This Rattus norvegicus (Rat) protein is Proline-rich membrane anchor 1 (Prima1).